Here is a 323-residue protein sequence, read N- to C-terminus: Acetyl esterase (323 aa).

Positions 91–93 (HGG) match the Involved in the stabilization of the negatively charged intermediate by the formation of the oxyanion hole motif. Residues S165, D262, and H292 contribute to the active site.

Belongs to the 'GDXG' lipolytic enzyme family. Homodimer. Interacts with MalT and MelA.

It localises to the cytoplasm. Its function is as follows. Displays esterase activity towards short chain fatty esters (acyl chain length of up to 8 carbons). Able to hydrolyze triacetylglycerol (triacetin) and tributyrylglycerol (tributyrin), but not trioleylglycerol (triolein) or cholesterol oleate. Negatively regulates MalT activity by antagonizing maltotriose binding. Inhibits MelA galactosidase activity. The sequence is that of Acetyl esterase from Salmonella choleraesuis (strain SC-B67).